The following is a 484-amino-acid chain: Notoamide biosynthesis transcriptional activator notL (484 aa).

Residues 33 to 60 (CQSCATSKIKCPKEKTSCSKCQARGIEC) constitute a DNA-binding region (zn(2)-C6 fungal-type). Disordered regions lie at residues 70 to 154 (RRRE…NNSV) and 363 to 387 (GGGESDTGQRPATSMIPNGKDQMRP). Residues 76–122 (TGHPTSCTSTSTTANSSSSSSRSSNSSSSSSTSPPSSSSSLSSNPEP) show a composition bias toward low complexity. A compositionally biased stretch (basic and acidic residues) spans 123 to 133 (TSDKDLPRPRS). Composition is skewed to polar residues over residues 139 to 154 (ANSTEPSILPPANNSV) and 368 to 378 (DTGQRPATSMI).

The protein localises to the nucleus. In terms of biological role, transcription factor that probably regulates the expression of the gene cluster that mediates the biosynthesis of notoamide, a fungal indole alkaloid that belongs to a family of natural products containing a characteristic bicyclo[2.2.2]diazaoctane core. This is Notoamide biosynthesis transcriptional activator notL from Aspergillus sp. (strain MF297-2).